We begin with the raw amino-acid sequence, 943 residues long: Isoleucine--tRNA ligase (943 aa).

The short motif at 58 to 68 is the 'HIGH' region element; sequence PYANGKIHIGH. Position 567 (glutamate 567) interacts with L-isoleucyl-5'-AMP. The 'KMSKS' region signature appears at 608-612; the sequence is KMSKS. Lysine 611 provides a ligand contact to ATP. Zn(2+) contacts are provided by cysteine 906, cysteine 909, cysteine 926, and cysteine 929.

It belongs to the class-I aminoacyl-tRNA synthetase family. IleS type 1 subfamily. Monomer. Zn(2+) serves as cofactor.

The protein localises to the cytoplasm. The catalysed reaction is tRNA(Ile) + L-isoleucine + ATP = L-isoleucyl-tRNA(Ile) + AMP + diphosphate. Catalyzes the attachment of isoleucine to tRNA(Ile). As IleRS can inadvertently accommodate and process structurally similar amino acids such as valine, to avoid such errors it has two additional distinct tRNA(Ile)-dependent editing activities. One activity is designated as 'pretransfer' editing and involves the hydrolysis of activated Val-AMP. The other activity is designated 'posttransfer' editing and involves deacylation of mischarged Val-tRNA(Ile). This Pseudomonas entomophila (strain L48) protein is Isoleucine--tRNA ligase.